Reading from the N-terminus, the 80-residue chain is D-alanyl carrier protein (80 aa).

The region spanning 1–77 (MDIQKQIVDI…KLVEQVKKLQ (77 aa)) is the Carrier domain. Serine 35 is subject to O-(pantetheine 4'-phosphoryl)serine.

The protein belongs to the DltC family. In terms of processing, 4'-phosphopantetheine is transferred from CoA to a specific serine of apo-DCP.

It localises to the cytoplasm. The protein operates within cell wall biogenesis; lipoteichoic acid biosynthesis. Its function is as follows. Carrier protein involved in the D-alanylation of lipoteichoic acid (LTA). The loading of thioester-linked D-alanine onto DltC is catalyzed by D-alanine--D-alanyl carrier protein ligase DltA. The DltC-carried D-alanyl group is further transferred to cell membrane phosphatidylglycerol (PG) by forming an ester bond, probably catalyzed by DltD. D-alanylation of LTA plays an important role in modulating the properties of the cell wall in Gram-positive bacteria, influencing the net charge of the cell wall. The protein is D-alanyl carrier protein of Lactobacillus delbrueckii subsp. bulgaricus (strain ATCC 11842 / DSM 20081 / BCRC 10696 / JCM 1002 / NBRC 13953 / NCIMB 11778 / NCTC 12712 / WDCM 00102 / Lb 14).